The sequence spans 141 residues: Aspartate 1-decarboxylase (141 aa).

The active-site Schiff-base intermediate with substrate; via pyruvic acid is S25. Residue S25 is modified to Pyruvic acid (Ser). Position 57 (T57) interacts with substrate. The Proton donor role is filled by Y58. 73-75 (GAA) contributes to the substrate binding site.

Belongs to the PanD family. As to quaternary structure, heterooctamer of four alpha and four beta subunits. It depends on pyruvate as a cofactor. In terms of processing, is synthesized initially as an inactive proenzyme, which is activated by self-cleavage at a specific serine bond to produce a beta-subunit with a hydroxyl group at its C-terminus and an alpha-subunit with a pyruvoyl group at its N-terminus.

Its subcellular location is the cytoplasm. The enzyme catalyses L-aspartate + H(+) = beta-alanine + CO2. It functions in the pathway cofactor biosynthesis; (R)-pantothenate biosynthesis; beta-alanine from L-aspartate: step 1/1. Catalyzes the pyruvoyl-dependent decarboxylation of aspartate to produce beta-alanine. The sequence is that of Aspartate 1-decarboxylase from Pseudarthrobacter chlorophenolicus (strain ATCC 700700 / DSM 12829 / CIP 107037 / JCM 12360 / KCTC 9906 / NCIMB 13794 / A6) (Arthrobacter chlorophenolicus).